The chain runs to 599 residues: Elongation factor 4 (599 aa).

The tr-type G domain occupies 4-186 (EHIRNFSIIA…EIVKKIPPPQ (183 aa)). Residues 16-21 (DHGKST) and 133-136 (NKID) each bind GTP.

This sequence belongs to the TRAFAC class translation factor GTPase superfamily. Classic translation factor GTPase family. LepA subfamily.

The protein localises to the cell inner membrane. It catalyses the reaction GTP + H2O = GDP + phosphate + H(+). Functionally, required for accurate and efficient protein synthesis under certain stress conditions. May act as a fidelity factor of the translation reaction, by catalyzing a one-codon backward translocation of tRNAs on improperly translocated ribosomes. Back-translocation proceeds from a post-translocation (POST) complex to a pre-translocation (PRE) complex, thus giving elongation factor G a second chance to translocate the tRNAs correctly. Binds to ribosomes in a GTP-dependent manner. The protein is Elongation factor 4 of Geobacter sp. (strain M21).